Reading from the N-terminus, the 305-residue chain is Mas-related G-protein coupled receptor member A7 (305 aa).

At 1 to 17 the chain is on the extracellular side; it reads MDETSPRSIDIESLIPN. A helical membrane pass occupies residues 18-38; the sequence is LMIIIFGLVGLTGNAIVLWLL. The Cytoplasmic segment spans residues 39 to 46; the sequence is GFCLHRNA. Residues 47-67 traverse the membrane as a helical segment; sequence FLVYILNLALADFLFLLCHFI. Residues 68-81 lie on the Extracellular side of the membrane; that stretch reads NSAMFLLKVPIPNG. A helical transmembrane segment spans residues 82 to 102; that stretch reads IFVYCFYTIKMVLYITGLSML. Over 103-129 the chain is Cytoplasmic; that stretch reads SAISTERCLSVLCPIWYHCRRPEHTST. Residues 130–150 traverse the membrane as a helical segment; sequence VMCAVIWIFSVLICILKEYFC. The Extracellular segment spans residues 151-167; sequence DFFGTKLGNYYVCQASN. The helical transmembrane segment at 168–188 threads the bilayer; that stretch reads FFMGAYLMFLFVVLCLSTLAL. The Cytoplasmic portion of the chain corresponds to 189-211; sequence LARLFCGAEKMKFTRLFVTIMLT. A helical membrane pass occupies residues 212 to 232; the sequence is ILVFLLCGLPWGFFWFLLIWI. Residues 233 to 244 lie on the Extracellular side of the membrane; it reads KGGFSVLDYRLY. Residues 245 to 265 traverse the membrane as a helical segment; it reads LASIVLTVVNSCANPIIYFFV. Residues 266-305 lie on the Cytoplasmic side of the membrane; that stretch reads GSFRHRLKHQTLKMVLQSALQDTPETHENMVEMSRIKAEQ.

The protein belongs to the G-protein coupled receptor 1 family. Mas subfamily. As to expression, expressed in a subset of sensory neurons that includes nociceptors. Expressed in the subclass of non-peptidergic sensory neurons that are IB4(+) and VR1(-).

The protein resides in the cell membrane. Functionally, orphan receptor. May be a receptor for RFamide-family neuropeptides such as NPFF and NPAF, which are analgesic in vivo. May regulate nociceptor function and/or development, including the sensation or modulation of pain. The sequence is that of Mas-related G-protein coupled receptor member A7 (Mrgpra7) from Mus musculus (Mouse).